A 79-amino-acid polypeptide reads, in one-letter code: ATP synthase subunit c (79 aa).

Transmembrane regions (helical) follow at residues 11-31 (MAAA…IGIL) and 53-73 (FFIV…LGLY).

Belongs to the ATPase C chain family. F-type ATPases have 2 components, F(1) - the catalytic core - and F(0) - the membrane proton channel. F(1) has five subunits: alpha(3), beta(3), gamma(1), delta(1), epsilon(1). F(0) has three main subunits: a(1), b(2) and c(10-14). The alpha and beta chains form an alternating ring which encloses part of the gamma chain. F(1) is attached to F(0) by a central stalk formed by the gamma and epsilon chains, while a peripheral stalk is formed by the delta and b chains.

Its subcellular location is the cell inner membrane. Its function is as follows. F(1)F(0) ATP synthase produces ATP from ADP in the presence of a proton or sodium gradient. F-type ATPases consist of two structural domains, F(1) containing the extramembraneous catalytic core and F(0) containing the membrane proton channel, linked together by a central stalk and a peripheral stalk. During catalysis, ATP synthesis in the catalytic domain of F(1) is coupled via a rotary mechanism of the central stalk subunits to proton translocation. Functionally, key component of the F(0) channel; it plays a direct role in translocation across the membrane. A homomeric c-ring of between 10-14 subunits forms the central stalk rotor element with the F(1) delta and epsilon subunits. This Yersinia enterocolitica serotype O:8 / biotype 1B (strain NCTC 13174 / 8081) protein is ATP synthase subunit c.